Reading from the N-terminus, the 489-residue chain is Metalloreductase STEAP2 (489 aa).

Residues 37–40 (SGDF), 59–60 (SR), 92–99 (IHREHYTS), Asn-117, and Ala-150 contribute to the NADP(+) site. Residues Trp-151 and Asp-159 each coordinate FAD. Residues 207–227 (LFTLWRGPVVVAISLATFFFL) form a helical membrane-spanning segment. Tyr-228 contributes to the Fe(3+) binding site. The chain crosses the membrane as a helical span at residues 258–278 (LPIVAITLLSLVYLAGLLAAA). One can recognise a Ferric oxidoreductase domain in the interval 258–406 (LPIVAITLLS…LGYVALLITT (149 aa)). Residues Gln-280 and Arg-301 each contribute to the FAD site. Transmembrane regions (helical) follow at residues 304 to 324 (LGLLSFFFAVVHVAYSLCLPM), 358 to 378 (MYISFGIMSLGLLSLLAVTSI), 392 to 412 (FIQSTLGYVALLITTFHVLIY), and 431 to 451 (FVLALVLPSIVILGKMILLLP). His-315 serves as a coordination point for heme b. Position 318 (Tyr-318) interacts with Fe(3+). The FAD site is built by Ser-377 and Gln-394. Residue His-408 participates in heme b binding. A Phosphoserine modification is found at Ser-482.

The protein belongs to the STEAP family. Requires FAD as cofactor. The cofactor is heme b.

It is found in the cell membrane. The protein resides in the endosome membrane. The enzyme catalyses 2 Fe(2+) + NADP(+) + H(+) = 2 Fe(3+) + NADPH. It carries out the reaction 2 Cu(+) + NADP(+) + H(+) = 2 Cu(2+) + NADPH. In terms of biological role, integral membrane protein that functions as a NADPH-dependent ferric-chelate reductase, using NADPH from one side of the membrane to reduce a Fe(3+) chelate that is bound on the other side of the membrane. Mediates sequential transmembrane electron transfer from NADPH to FAD and onto heme, and finally to the Fe(3+) chelate. Can also reduce Cu(2+) to Cu(1+). The sequence is that of Metalloreductase STEAP2 (Steap2) from Mus musculus (Mouse).